Here is a 197-residue protein sequence, read N- to C-terminus: dTTP/UTP pyrophosphatase (197 aa).

Residue D70 is the Proton acceptor of the active site.

Belongs to the Maf family. YhdE subfamily. Requires a divalent metal cation as cofactor.

It localises to the cytoplasm. It carries out the reaction dTTP + H2O = dTMP + diphosphate + H(+). It catalyses the reaction UTP + H2O = UMP + diphosphate + H(+). Its function is as follows. Nucleoside triphosphate pyrophosphatase that hydrolyzes dTTP and UTP. May have a dual role in cell division arrest and in preventing the incorporation of modified nucleotides into cellular nucleic acids. The polypeptide is dTTP/UTP pyrophosphatase (yceF2) (Salmonella choleraesuis (strain SC-B67)).